The chain runs to 511 residues: Vesicular acetylcholine transporter (511 aa).

The Cytoplasmic portion of the chain corresponds to 1–36 (MAVGQAKAAMGKISSAIGERSKRISGAMNEPRRKRK). The chain crosses the membrane as a helical span at residues 37–57 (ILLVIVCIAMLLDNMLYMVIV). The Lumenal, vesicle portion of the chain corresponds to 58-108 (PIIPNYLETIRTYKLVYITTPSNGTNGSLLNSTQRAVLERNPNANEDIQIG). 3 N-linked (GlcNAc...) asparagine glycosylation sites follow: asparagine 80, asparagine 83, and asparagine 88. Residues 109 to 129 (VLFASKAILQLLSNPFTGTFI) traverse the membrane as a helical segment. The Cytoplasmic segment spans residues 130–135 (DRVGYD). The chain crosses the membrane as a helical span at residues 136-156 (IPLLIGLTIMFFSTITFAFGE). At 157-165 (SYAILFAAR) the chain is on the lumenal, vesicle side. A helical membrane pass occupies residues 166-186 (SLQGLGSAFADTSGIAMIADK). The Cytoplasmic segment spans residues 187–197 (YTEESERTQAL). The chain crosses the membrane as a helical span at residues 198–218 (GIALAFISFGSLVAPPFGGVL). The Lumenal, vesicle segment spans residues 219-225 (YQFAGKW). Residues 226 to 246 (VPFLVLSFVCLLDGILLLMVV) form a helical membrane-spanning segment. Residues 247–267 (TPFASRTRVNTLQGTPIYKLM) lie on the Cytoplasmic side of the membrane. A helical transmembrane segment spans residues 268–288 (IDPYIAVVAGALTTCNIPLAF). The Lumenal, vesicle portion of the chain corresponds to 289–306 (LEPTISNWMKKTMNASEW). Asparagine 302 carries an N-linked (GlcNAc...) asparagine glycan. The helical transmembrane segment at 307-327 (QMGITWLPAFFPHILGVYITV) threads the bilayer. Over 328 to 337 (KLAAKYPNYQ) the chain is Cytoplasmic. Residues 338-358 (WLYGAVGLVIIGASSCTIPAC) traverse the membrane as a helical segment. Over 359–363 (RNFEE) the chain is Lumenal, vesicle. A helical transmembrane segment spans residues 364–384 (LIIPLCALCFGIALVDTALLP). Residues 385 to 400 (TLAFLVDIRYVSVYGS) lie on the Cytoplasmic side of the membrane. A helical membrane pass occupies residues 401–421 (VYAIADISYSVAYALGPIMAG). Topologically, residues 422–428 (QIVHDLG) are lumenal, vesicle. The chain crosses the membrane as a helical span at residues 429–449 (FVQLNLGMGLVNILYAPGLLF). At 450 to 511 (LRNVCQMKPS…VLSDQEGYSE (62 aa)) the chain is on the cytoplasmic side. Residues 485 to 511 (EAKEPHGTSSGNHSVHAVLSDQEGYSE) form a disordered region.

Belongs to the major facilitator superfamily. Vesicular transporter family. High expression in the electric lobe of the brain.

It localises to the membrane. Functionally, involved in acetylcholine transport into synaptic vesicles. This chain is Vesicular acetylcholine transporter, found in Torpedo marmorata (Marbled electric ray).